The following is a 1969-amino-acid chain: MSGNPDAFENDPGFPFLGISREARAATAARPFDSKKNCWIPDPEDGFVAAEIQSTTGEQVTVVTVKGNQITVKKDQCQEMNPPKFDKTEDMANLTFLNEASVLGNLKDRYKDLMIYTYSGLFCVVINPYKRLPIYSESVIKHFMGKRRNEMPPHLFAVSDEAYRNMVQDKENQSMLITGESGAGKTENTKKVISYFAIVGATQAASGKEAKDGKKGGTLEEQIVQTNPVLEAFGNAKTVRNNNSSRFGKFIRTHFSGSGKLAGGDIEHYLLEKSRVVRQAPGERCYHIFYQIMSGNDPSLRGKLKLSNDITYYHFCSQAELTIEGMDDKEEMRLTQEAFDIMGFEDNETMDLYRSTAGIMHMGEMKFKQRPREEQAEPDGEEDALNAAAMLGIQAEEFLKALTKPRVRVGTEWVNKGQNLEQVNWAVSGLAKAIYARMFKWIITRCNKTLDAKEIERKHFIGVLDIAGFEIFDLNSFEQLWINFVNERLQQFFNHHMFVLEQEEYKREGIAWTFIDFGLDLQACIELIEKPLGIISILDEECIVPKATDMTYAQKLLDQHLGKHPNFQKPKPPKGKQGDAHFAIVHYAGTVRYNATNFLEKNKDPLNDTAVALLKHSTDNSLMLDIWQDYQTQEEAAEAAKAGQTAGGKRGKSSSFATVSMIYRESLNNLMNMLYQTHPHFIRCIIPNEKKASGVIDSALVLNQLTCNGVLEGIRICRKGFPNRMLYPDFKHRYAILAADAAKESDPKKASVGILDKISVDGNLTDEEFKVGETKIFFKAGVLAKLEDLRDEILSRIVTMFQSRIRSYLAKAEVRRRYEQQTGLLVVQRNVRAWCTLRTWEWFKLFGKVKPMLKAGKEQEAMGELAVKIQKLEEAVQRGEIARSQLESQVADLVEEKNALFLSLETEKANLADAEERNEKLNQLKATLESKLSDITGQLEDMQERNEDLARQKKKTDQELSDTKKHVQDLELSLRKAEQEKQSRDHNIRSLQDEMANQDEAVAKLNKEKKHQEESNRKLNEDLQSEEDKVNHLEKIRNKLEQQMDELEENIDREKRSRGDIEKAKRKVEGDLKVAQENIDEITKQKHDVETTLKRKEEDLHHTNAKLAENNSIIAKLQRLIKELTARNAELEEELEAERNSRQKSDRSRSEAERELEELTERLEQQGGATAAQLEANKKREAEIAKLRREKEEDSLNHETAISSLRKRHGDSVAELTEQLETLQKLKAKSEAEKSKLQRDLEESQHATDSEVRSRQDLEKALKTIEVQYSELQTKADEQSRQLQDFAALKNRLNNENSDLNRSLEEMDNQLNSLHRLKSTLQSQLDETRRNYDEESRERQALAATAKNLEHENTILREHLDEEAESKADLTRQISKLNAEIQQWKARFDSEGLNKLEEIEAAKKALQLKVQELTDTNEGLFAKIASQEKVRFKLMQDLDDAQSDVEKAAAQVAFYEKHRRQFESIIAEWKKKTDDLSSELDAAQRDNRQLSTDLFKAKTANDELAEYLDSTRRENKSLAQEVKDLTDQLGEGGRSVAELQKIVRKLEVEKEELQKALDEAEAALEAEEAKVLRAQIEVSQIRSEIEKRIQEKEEEFENTRRNHQRALESMQATLEAETKQKEEALRIKKKLESDINDLEIALDHANRAYADAQKTIKKYMETVQELQFQIEEEQRQKDEIREQFLASEKRNAILQSEKDELAQQAEAAERARRNAEAECIELREQNNDLNAHVSALTGQRRKLEGELLAAHAELEEIANELKNAVEQGQKASADAARLAEELRQEQEHSMHIERIRKGLELQIKEMQIRLDDAENAALKGGKKIIAQLEARIRAIEQELDGEQRRHQDTEKNWRKAERRVKEVEFQVVEEKKNEERLTELVDKLQCKLKIFKRQVEEAEEVAASNLNKYKVLTAQFEQAEERADIAENALSKMRNKIRASASMAPPDGFPMVPSASSALIRSSSNARFL.

The Myosin N-terminal SH3-like domain occupies 33–82 (DSKKNCWIPDPEDGFVAAEIQSTTGEQVTVVTVKGNQITVKKDQCQEMNP). Positions 86–791 (DKTEDMANLT…VLAKLEDLRD (706 aa)) constitute a Myosin motor domain. Position 130 is an N6,N6,N6-trimethyllysine (K130). Position 179–186 (179–186 (GESGAGKT)) interacts with ATP. Actin-binding regions lie at residues 667–689 (LNNLMNMLYQTHPHFIRCIIPNE) and 770–784 (KVGETKIFFKAGVLA). The IQ domain maps to 794 to 823 (LSRIVTMFQSRIRSYLAKAEVRRRYEQQTG). Positions 857 to 1969 (KEQEAMGELA…IRSSSNARFL (1113 aa)) form a coiled coil. Disordered regions lie at residues 942 to 966 (MQERNEDLARQKKKTDQELSDTKKH), 1006 to 1029 (NKEKKHQEESNRKLNEDLQSEEDK), 1131 to 1213 (LEEE…GDSV), and 1234 to 1255 (KSKLQRDLEESQHATDSEVRSR). Composition is skewed to basic and acidic residues over residues 1137-1164 (AERNSRQKSDRSRSEAERELEELTERLE) and 1176-1197 (ANKKREAEIAKLRREKEEDSLN).

The protein belongs to the TRAFAC class myosin-kinesin ATPase superfamily. Myosin family. In terms of assembly, muscle myosin is a hexameric protein that consists of 2 heavy chain subunits (MHC), 2 alkali light chain subunits (MLC) and 2 regulatory light chain subunits (MLC-2). In terms of tissue distribution, expressed in body wall muscles, neighboring vulval muscle cells and the contractile sheath covering the hermaphrodite gonad (myoepithelial sheath cells).

It localises to the cytoplasm. Its subcellular location is the myofibril. The protein localises to the sarcomere. It is found in the a band. Essential for muscle contraction. Involved in ovulation likely by regulating the contraction of gonadal myoepithelial sheath cells. In Caenorhabditis elegans, this protein is Myosin-3 (myo-3).